The primary structure comprises 526 residues: Probable feruloyl esterase B-2 (526 aa).

The signal sequence occupies residues 1 to 18 (MTKLSLLPLLTLASAVLA). Intrachain disulfides connect Cys-27–Cys-74 and Cys-62–Cys-113. A glycan (N-linked (GlcNAc...) asparagine) is linked at Asn-52. Residue Asn-137 is glycosylated (N-linked (GlcNAc...) asparagine). 4 cysteine pairs are disulfide-bonded: Cys-186–Cys-441, Cys-255–Cys-272, Cys-281–Cys-291, and Cys-503–Cys-525. Catalysis depends on Ser-187, which acts as the Acyl-ester intermediate. N-linked (GlcNAc...) asparagine glycosylation is present at Asn-233. Asp-256, Asp-259, Ala-261, Asp-263, and Ile-265 together coordinate Ca(2+). Catalysis depends on charge relay system residues Asp-400 and His-440. A glycan (N-linked (GlcNAc...) asparagine) is linked at Asn-516.

It belongs to the tannase family.

It is found in the secreted. It carries out the reaction feruloyl-polysaccharide + H2O = ferulate + polysaccharide.. Involved in degradation of plant cell walls. Hydrolyzes the feruloyl-arabinose ester bond in arabinoxylans as well as the feruloyl-galactose and feruloyl-arabinose ester bonds in pectin. This Aspergillus fumigatus (strain ATCC MYA-4609 / CBS 101355 / FGSC A1100 / Af293) (Neosartorya fumigata) protein is Probable feruloyl esterase B-2 (faeB-2).